The sequence spans 376 residues: Putative glutamate--cysteine ligase 2 (376 aa).

The protein belongs to the glutamate--cysteine ligase type 2 family. YbdK subfamily.

The enzyme catalyses L-cysteine + L-glutamate + ATP = gamma-L-glutamyl-L-cysteine + ADP + phosphate + H(+). In terms of biological role, ATP-dependent carboxylate-amine ligase which exhibits weak glutamate--cysteine ligase activity. The protein is Putative glutamate--cysteine ligase 2 of Mycobacterium bovis (strain ATCC BAA-935 / AF2122/97).